We begin with the raw amino-acid sequence, 381 residues long: Teichoic acid glycerol-phosphate primase (381 aa).

The protein belongs to the CDP-glycerol glycerophosphotransferase family.

The protein localises to the cell membrane. It catalyses the reaction N-acetyl-beta-D-mannosaminyl-(1-&gt;4)-N-acetyl-alpha-D-glucosaminyl di-trans,octa-cis-undecaprenyl diphosphate + CDP-glycerol = 4-O-[(2R)-glycerylphospho]-N-acetyl-beta-D-mannosaminyl-(1-&gt;4)-N-acetyl-alpha-D-glucosaminyl di-trans,octa-cis-undecaprenyl diphosphate + CMP + H(+). It participates in cell wall biogenesis; poly(glycerol phosphate) teichoic acid biosynthesis. Catalyzes the addition of a single glycerol phosphate residue to the prenoldiphosphate-linked disaccharide, as a primer for polymerisation by TagF. The chain is Teichoic acid glycerol-phosphate primase (tagB) from Bacillus subtilis (strain 168).